Here is a 242-residue protein sequence, read N- to C-terminus: Probable 2-phosphosulfolactate phosphatase (242 aa).

The protein belongs to the ComB family. Mg(2+) serves as cofactor.

It catalyses the reaction (2R)-O-phospho-3-sulfolactate + H2O = (2R)-3-sulfolactate + phosphate. This chain is Probable 2-phosphosulfolactate phosphatase, found in Synechococcus sp. (strain JA-2-3B'a(2-13)) (Cyanobacteria bacterium Yellowstone B-Prime).